The following is a 265-amino-acid chain: Orotidine 5'-phosphate decarboxylase (265 aa).

Residues Asp37, 59 to 61, 91 to 100, Tyr217, and Arg235 contribute to the substrate site; these read KTH and DRKFADIGNT. Lys93 serves as the catalytic Proton donor.

It belongs to the OMP decarboxylase family.

The enzyme catalyses orotidine 5'-phosphate + H(+) = UMP + CO2. The protein operates within pyrimidine metabolism; UMP biosynthesis via de novo pathway; UMP from orotate: step 2/2. In Diutina rugosa (Yeast), this protein is Orotidine 5'-phosphate decarboxylase (URA3).